The primary structure comprises 89 residues: Small ribosomal subunit protein uS14A (89 aa).

This sequence belongs to the universal ribosomal protein uS14 family. In terms of assembly, part of the 30S ribosomal subunit. Contacts proteins S3 and S10.

Binds 16S rRNA, required for the assembly of 30S particles and may also be responsible for determining the conformation of the 16S rRNA at the A site. This Oceanobacillus iheyensis (strain DSM 14371 / CIP 107618 / JCM 11309 / KCTC 3954 / HTE831) protein is Small ribosomal subunit protein uS14A.